A 396-amino-acid chain; its full sequence is Phosphoglycerate kinase (396 aa).

Residues 21-23, Arg36, 59-62, Arg119, and Arg156 each bind substrate; these read DFN and HLGK. ATP contacts are provided by residues Lys206, Glu325, and 352 to 355; that span reads GGDS.

This sequence belongs to the phosphoglycerate kinase family. As to quaternary structure, monomer.

It localises to the cytoplasm. It carries out the reaction (2R)-3-phosphoglycerate + ATP = (2R)-3-phospho-glyceroyl phosphate + ADP. Its pathway is carbohydrate degradation; glycolysis; pyruvate from D-glyceraldehyde 3-phosphate: step 2/5. This is Phosphoglycerate kinase from Macrococcus caseolyticus (strain JCSC5402) (Macrococcoides caseolyticum).